Here is a 1391-residue protein sequence, read N- to C-terminus: DNA-directed RNA polymerase subunit beta (1391 aa).

This sequence belongs to the RNA polymerase beta chain family. The RNAP catalytic core consists of 2 alpha, 1 beta, 1 beta' and 1 omega subunit. When a sigma factor is associated with the core the holoenzyme is formed, which can initiate transcription.

The enzyme catalyses RNA(n) + a ribonucleoside 5'-triphosphate = RNA(n+1) + diphosphate. Functionally, DNA-dependent RNA polymerase catalyzes the transcription of DNA into RNA using the four ribonucleoside triphosphates as substrates. The protein is DNA-directed RNA polymerase subunit beta of Granulibacter bethesdensis (strain ATCC BAA-1260 / CGDNIH1).